The primary structure comprises 105 residues: ATP-dependent Clp protease adapter protein ClpS (105 aa).

The protein belongs to the ClpS family. Binds to the N-terminal domain of the chaperone ClpA.

Involved in the modulation of the specificity of the ClpAP-mediated ATP-dependent protein degradation. The sequence is that of ATP-dependent Clp protease adapter protein ClpS from Aeromonas salmonicida (strain A449).